The chain runs to 308 residues: Sulfoquinovosyl glycerol transport system permease protein SmoG (308 aa).

The next 6 membrane-spanning stretches (helical) occupy residues 28 to 48 (LAVL…VYPV), 92 to 112 (VLIT…LALL), 126 to 146 (SLLI…AWFF), 164 to 184 (GIIW…TIIW), 223 to 243 (ITLP…TITA), and 279 to 299 (LGYG…VTAV). In terms of domain architecture, ABC transmembrane type-1 spans 88 to 300 (TWNTVLITLI…ALSMCVTAVY (213 aa)).

This sequence belongs to the binding-protein-dependent transport system permease family. The complex is probably composed of two ATP-binding proteins (SmoE), two transmembrane proteins (SmoG and SmoH) and a solute-binding protein (SmoF).

It is found in the cell inner membrane. Part of the ABC transporter complex SmoEFGH involved in sulfoquinovosyl glycerol (SQGro) uptake. Responsible for the translocation of the substrate across the membrane. In Agrobacterium fabrum (strain C58 / ATCC 33970) (Agrobacterium tumefaciens (strain C58)), this protein is Sulfoquinovosyl glycerol transport system permease protein SmoG.